The primary structure comprises 661 residues: 7-beta-hydroxy-3-oxochol-24-oyl-CoA 4-desaturase (661 aa).

Position 104 (Q104) interacts with FMN. 168-171 (HCAH) contributes to the substrate binding site. Y173 (proton donor) is an active-site residue. Residues R222, K298, and 320 to 321 (GR) each bind FMN. C344, C347, C351, and C363 together coordinate [4Fe-4S] cluster. FAD contacts are provided by G394, E413, Q421, K431, and A458.

The protein in the N-terminal section; belongs to the NADH:flavin oxidoreductase/NADH oxidase family. In terms of assembly, homotrimer. FMN is required as a cofactor. FAD serves as cofactor. Requires [4Fe-4S] cluster as cofactor.

The catalysed reaction is 7beta-hydroxy-3-oxochol-24-oyl-CoA + NAD(+) = 7beta-hydroxy-3-oxochol-4-en-24-oyl-CoA + NADH + H(+). It functions in the pathway lipid metabolism; bile acid degradation. Its activity is regulated as follows. Activity is inhibited by sulfhydryl-reactive compounds, acriflavine, o-phenanthroline and EDTA. NADH-dependent flavin oxidoreductase. Stereo-specific NAD(H)-dependent 3-oxo-delta4-cholenoic acid oxidoreductase involved in bile acid 7beta-dehydroxylation. The sequence is that of 7-beta-hydroxy-3-oxochol-24-oyl-CoA 4-desaturase from Clostridium scindens (strain JCM 10418 / VPI 12708).